An 88-amino-acid polypeptide reads, in one-letter code: Small cysteine-rich outer membrane protein OmcA (88 aa).

The first 18 residues, M1–S18, serve as a signal peptide directing secretion. The N-palmitoyl cysteine moiety is linked to residue C19. Residue C19 is the site of S-diacylglycerol cysteine attachment. The interval T67–Q88 is disordered.

Part of a disulfide cross-linked outer membrane complex (COMC) composed of the major outer membrane porin (MOMP), the small cysteine-rich protein (OmcA) and the large cysteine-rich periplasmic protein (OmcB).

The protein localises to the cell outer membrane. Functionally, in elementary bodies (EBs, the infectious stage, which is able to survive outside the host cell) provides the structural integrity of the outer envelope through disulfide cross-links with the large cysteine-rich periplasmic protein and the major outer membrane porin. It has been described in publications as the Sarkosyl-insoluble COMC (Chlamydia outer membrane complex), and serves as the functional equivalent of peptidoglycan. The sequence is that of Small cysteine-rich outer membrane protein OmcA (omcA) from Chlamydia trachomatis serovar L2 (strain ATCC VR-902B / DSM 19102 / 434/Bu).